The sequence spans 320 residues: Cytochrome f (320 aa).

Positions Met-1–Ala-35 are cleaved as a signal peptide. Heme-binding residues include Tyr-36, Cys-56, Cys-59, and His-60. The chain crosses the membrane as a helical span at residues Val-286 to Lys-306.

This sequence belongs to the cytochrome f family. In terms of assembly, the 4 large subunits of the cytochrome b6-f complex are cytochrome b6, subunit IV (17 kDa polypeptide, petD), cytochrome f and the Rieske protein, while the 4 small subunits are PetG, PetL, PetM and PetN. The complex functions as a dimer. Requires heme as cofactor.

It is found in the plastid. The protein localises to the chloroplast thylakoid membrane. Component of the cytochrome b6-f complex, which mediates electron transfer between photosystem II (PSII) and photosystem I (PSI), cyclic electron flow around PSI, and state transitions. This chain is Cytochrome f, found in Populus trichocarpa (Western balsam poplar).